The following is a 234-amino-acid chain: Venom allergen 3 (234 aa).

Positions 1 to 22 (MELIVSILWLAITAENLANTLA) are cleaved as a signal peptide. 4 disulfide bridges follow: Cys26–Cys41, Cys31–Cys125, Cys52–Cys118, and Cys198–Cys216. The region spanning 69–218 (VNKHNELRQR…WTKHYLVCNY (150 aa)) is the SCP domain. Residues 80-99 (ASGKEMRGTNGPQPPAVKMP) are disordered.

The protein belongs to the CRISP family. In terms of tissue distribution, expressed by the venom gland.

The protein localises to the secreted. This Solenopsis invicta (Red imported fire ant) protein is Venom allergen 3.